The chain runs to 301 residues: Probable alpha-L-glutamate ligase (301 aa).

Positions 104–287 (LQLLSRRGIG…VAGMIIEYLE (184 aa)) constitute an ATP-grasp domain. ATP is bound by residues Lys-141, 178–179 (EY), Asp-187, and 211–213 (RSN). Asp-248, Glu-260, and Asn-262 together coordinate Mg(2+). Mn(2+) contacts are provided by Asp-248, Glu-260, and Asn-262.

It belongs to the RimK family. Mg(2+) is required as a cofactor. The cofactor is Mn(2+).

This chain is Probable alpha-L-glutamate ligase, found in Pseudomonas savastanoi pv. phaseolicola (strain 1448A / Race 6) (Pseudomonas syringae pv. phaseolicola (strain 1448A / Race 6)).